Here is a 232-residue protein sequence, read N- to C-terminus: DnaJ homolog subfamily B member 8 (232 aa).

The 67-residue stretch at 3 to 69 folds into the J domain; sequence NYYEVLGVQA…KKRSLYDRAG (67 aa).

In terms of assembly, interacts with histone deacetylases HDAC4, HDAC6, and SIRT2, HDAC activity is required for antiaggregation.

Its function is as follows. Efficient suppressor of aggregation and toxicity of disease-associated polyglutamine proteins. This chain is DnaJ homolog subfamily B member 8 (DNAJB8), found in Homo sapiens (Human).